The sequence spans 175 residues: Thioredoxin-like protein CITRX, chloroplastic (175 aa).

A chloroplast-targeting transit peptide spans 1-73; the sequence is MQAASLAFHP…REDYLVKKLS (73 aa). Residues 74–175 enclose the Thioredoxin domain; the sequence is AKEIQELIKG…MMRDIINNDL (102 aa). Residues cysteine 98 and cysteine 101 each act as nucleophile in the active site. Residues cysteine 98 and cysteine 101 are joined by a disulfide bond.

It belongs to the thioredoxin family. Plant CITRX-type subfamily.

It is found in the plastid. The protein localises to the chloroplast. Probable thiol-disulfide oxidoreductase that may play a role in proper chloroplast development. The sequence is that of Thioredoxin-like protein CITRX, chloroplastic from Solanum tuberosum (Potato).